The following is a 453-amino-acid chain: Chromosomal replication initiator protein DnaA (453 aa).

Residues 1–78 (MTENEQLFWN…FEIFNAEITA (78 aa)) are domain I, interacts with DnaA modulators. The tract at residues 78-112 (ANYVSNDLHLQETSFSNYQQSSNEVNTLPIRKIDS) is domain II. A domain III, AAA+ region region spans residues 113–331 (NLKEKYTFAN…GALKNISLVA (219 aa)). Residues Gly157, Gly159, Lys160, and Thr161 each coordinate ATP. The domain IV, binds dsDNA stretch occupies residues 332 to 453 (DFKHAKTITV…EIETIKNKIR (122 aa)).

Belongs to the DnaA family. In terms of assembly, oligomerizes as a right-handed, spiral filament on DNA at oriC.

Its subcellular location is the cytoplasm. Plays an essential role in the initiation and regulation of chromosomal replication. ATP-DnaA binds to the origin of replication (oriC) to initiate formation of the DNA replication initiation complex once per cell cycle. Binds the DnaA box (a 9 base pair repeat at the origin) and separates the double-stranded (ds)DNA. Forms a right-handed helical filament on oriC DNA; dsDNA binds to the exterior of the filament while single-stranded (ss)DNA is stabiized in the filament's interior. The ATP-DnaA-oriC complex binds and stabilizes one strand of the AT-rich DNA unwinding element (DUE), permitting loading of DNA polymerase. After initiation quickly degrades to an ADP-DnaA complex that is not apt for DNA replication. Binds acidic phospholipids. This Streptococcus agalactiae serotype Ia (strain ATCC 27591 / A909 / CDC SS700) protein is Chromosomal replication initiator protein DnaA.